Reading from the N-terminus, the 434-residue chain is ATP-dependent RNA helicase RhlB (434 aa).

Positions glutamine 9–alanine 37 match the Q motif motif. Residues leucine 40–valine 219 form the Helicase ATP-binding domain. Alanine 53–threonine 60 serves as a coordination point for ATP. The DEAD box signature appears at aspartate 165–aspartate 168. Residues alanine 245–leucine 390 enclose the Helicase C-terminal domain. The disordered stretch occupies residues proline 394–alanine 434. Low complexity predominate over residues asparagine 406 to serine 418. Positions glycine 419–proline 428 are enriched in basic residues.

Belongs to the DEAD box helicase family. RhlB subfamily. As to quaternary structure, component of the RNA degradosome, which is a multiprotein complex involved in RNA processing and mRNA degradation.

It localises to the cytoplasm. It catalyses the reaction ATP + H2O = ADP + phosphate + H(+). DEAD-box RNA helicase involved in RNA degradation. Has RNA-dependent ATPase activity and unwinds double-stranded RNA. The chain is ATP-dependent RNA helicase RhlB from Aliivibrio salmonicida (strain LFI1238) (Vibrio salmonicida (strain LFI1238)).